The primary structure comprises 249 residues: ATP synthase subunit a, chloroplastic (249 aa).

Transmembrane regions (helical) follow at residues 40 to 60 (QVLI…VLAI), 97 to 117 (VPFI…GALL), 136 to 156 (INTT…AGLS), 201 to 221 (LVVV…VMFL), and 222 to 242 (GLFT…AYIG).

This sequence belongs to the ATPase A chain family. F-type ATPases have 2 components, CF(1) - the catalytic core - and CF(0) - the membrane proton channel. CF(1) has five subunits: alpha(3), beta(3), gamma(1), delta(1), epsilon(1). CF(0) has four main subunits: a, b, b' and c.

The protein localises to the plastid. It localises to the chloroplast thylakoid membrane. In terms of biological role, key component of the proton channel; it plays a direct role in the translocation of protons across the membrane. The polypeptide is ATP synthase subunit a, chloroplastic (Olimarabidopsis pumila (Dwarf rocket)).